A 383-amino-acid chain; its full sequence is MAKHLFTSESVSEGHPDKIADQISDAVLDAILAQDPKARVACETYVKTGMVLVGGEVTTSAWVDIEELTRKTVREIGYTHSDMGFDADSCAVLNAIGKQSPDINQGVDRADPKEQGAGDQGLMFGYASNETEILMPAPITYAHALVKRQSEVRKNGTLPWLRPDAKSQVTFAYENNKIVGIDAIVLSTQHSPDIAQADLIEGVMESIIKPVLPAQWLSKDTKYFINPTGRFVIGGPMGDCGLTGRKIIVDTYGGMARHGGGAFSGKDPSKVDRSAAYAARYVAKNIVAAGLADRCELQVSYAIGVAEPTSISIETFGTGKVSEEVLIKLVRQHFDLRPYGLTEMLNLARPIYQATAAYGHFGRNEFPWEATDKAEALRADAGL.

Residue His-15 participates in ATP binding. Asp-17 provides a ligand contact to Mg(2+). Glu-43 provides a ligand contact to K(+). Glu-56 and Gln-99 together coordinate L-methionine. The tract at residues 99–109 (QSPDINQGVDR) is flexible loop. ATP contacts are provided by residues 164–166 (DAK), 230–231 (RF), Asp-239, 245–246 (RK), Ala-262, and Lys-266. An L-methionine-binding site is contributed by Asp-239. Lys-270 contacts L-methionine.

The protein belongs to the AdoMet synthase family. Homotetramer; dimer of dimers. It depends on Mg(2+) as a cofactor. K(+) is required as a cofactor.

Its subcellular location is the cytoplasm. It catalyses the reaction L-methionine + ATP + H2O = S-adenosyl-L-methionine + phosphate + diphosphate. The protein operates within amino-acid biosynthesis; S-adenosyl-L-methionine biosynthesis; S-adenosyl-L-methionine from L-methionine: step 1/1. In terms of biological role, catalyzes the formation of S-adenosylmethionine (AdoMet) from methionine and ATP. The overall synthetic reaction is composed of two sequential steps, AdoMet formation and the subsequent tripolyphosphate hydrolysis which occurs prior to release of AdoMet from the enzyme. The sequence is that of S-adenosylmethionine synthase from Shewanella sp. (strain W3-18-1).